A 207-amino-acid chain; its full sequence is Serotonin N-acetyltransferase (207 aa).

The tract at residues 1–29 (MSTPSVHCLKPSPLHLPSGIPGSPGRQRR) is disordered. Residues 28–35 (RRHTLPAN) are YWHAZ-binding. Residue Thr31 is modified to Phosphothreonine; by PKA. Residues 35 to 196 (NEFRCLTPED…TFTEMHCSLR (162 aa)) enclose the N-acetyltransferase domain. Residue Leu124 coordinates substrate. Residues 124–126 (LAV) and 132–137 (QQGKGS) contribute to the acetyl-CoA site. Residue Met159 participates in substrate binding. Position 168-170 (168-170 (YQR)) interacts with acetyl-CoA. Ser205 is modified (phosphoserine; by PKA).

The protein belongs to the acetyltransferase family. AANAT subfamily. As to quaternary structure, monomer. Interacts with several 14-3-3 proteins, including YWHAB, YWHAE, YWHAG and YWHAZ, preferentially when phosphorylated at Thr-31. Phosphorylation on Ser-205 also allows binding to YWHAZ, but with a 10-fold lower affinity. The interaction with YWHAZ considerably increases affinity for arylalkylamines and acetyl-CoA and protects the enzyme from dephosphorylation and proteasomal degradation. It may also prevent thiol-dependent inactivation. The physiological stoichiometry of the interaction is not clear. In vitro studies show either 1:2 (i.e. 1 AANAT molecule per YWHAZ dimer) or 2:2. In terms of processing, cAMP-dependent phosphorylation on both N-terminal Thr-31 and C-terminal Ser-205 regulates AANAT activity by promoting interaction with 14-3-3 proteins. As to expression, highest expression in the pineal gland, followed by retina. Expressed at much lower levels in brainstem and pituitary gland. AANAT activity also detected at low levels in the olfactory lobe.

It is found in the cytoplasm. The enzyme catalyses a 2-arylethylamine + acetyl-CoA = an N-acetyl-2-arylethylamine + CoA + H(+). It participates in aromatic compound metabolism; melatonin biosynthesis; melatonin from serotonin: step 1/2. Controls the night/day rhythm of melatonin production in the pineal gland. Catalyzes the N-acetylation of serotonin into N-acetylserotonin, the penultimate step in the synthesis of melatonin. This Ovis aries (Sheep) protein is Serotonin N-acetyltransferase (AANAT).